The primary structure comprises 970 residues: Rho GTPase-activating protein gacK (970 aa).

The signal sequence occupies residues M1–A20. 5 disordered regions span residues S30 to I49, S258 to N285, E312 to T446, S487 to N550, and T860 to P886. Composition is skewed to low complexity over residues S35–I49 and S258–N269. Residues I321–T333 are compositionally biased toward pro residues. Positions R334 to T383 are enriched in low complexity. Polar residues predominate over residues P392 to P406. A compositionally biased stretch (low complexity) spans T407–S426. Positions P427–T446 are enriched in polar residues. The Rho-GAP domain occupies I754–L970. Low complexity predominate over residues T860 to D885.

It is found in the cytoplasm. In terms of biological role, rho GTPase-activating protein involved in the signal transduction pathway. The sequence is that of Rho GTPase-activating protein gacK (gacK) from Dictyostelium discoideum (Social amoeba).